The sequence spans 339 residues: Uroporphyrinogen decarboxylase (339 aa).

Substrate-binding positions include 21–25 (RQAGR), D71, Y147, S202, and H315.

Belongs to the uroporphyrinogen decarboxylase family. In terms of assembly, homodimer.

Its subcellular location is the cytoplasm. The catalysed reaction is uroporphyrinogen III + 4 H(+) = coproporphyrinogen III + 4 CO2. It participates in porphyrin-containing compound metabolism; protoporphyrin-IX biosynthesis; coproporphyrinogen-III from 5-aminolevulinate: step 4/4. In terms of biological role, catalyzes the decarboxylation of four acetate groups of uroporphyrinogen-III to yield coproporphyrinogen-III. This is Uroporphyrinogen decarboxylase from Helicobacter pylori (strain Shi470).